Here is a 472-residue protein sequence, read N- to C-terminus: Mothers against decapentaplegic homolog 1 (472 aa).

Residues 12–136 (PAVKRLLGWK…YKRVDSPVLP (125 aa)) form the MH1 domain. Zn(2+) is bound by residues C64, C109, C121, and H126. A disordered region spans residues 158-238 (NPLHQTEPPM…PPPAYMPPEE (81 aa)). Over residues 169 to 182 (QNATFPDSFPQQPA) the composition is skewed to polar residues. The segment covering 188–226 (TPNSPTNSYPSSPNSGTGSTATFPHSPSSSDPGSPFQMP) has biased composition (low complexity). Over residues 227–238 (ETPPPAYMPPEE) the composition is skewed to pro residues. Residues 278–472 (WCSIVYYELN…SPHNPISSVS (195 aa)) form the MH2 domain.

The protein belongs to the dwarfin/SMAD family. In terms of assembly, may form trimers with another Smad1 and the co-Smad Smad4.

It localises to the cytoplasm. It is found in the nucleus. Its function is as follows. Involved in ventralization. May mediate Bmp2b signaling during embryonic dorsal-ventral pattern formation, and may itself be a transcriptional target for Smad5-mediated Bmp2b signaling. This chain is Mothers against decapentaplegic homolog 1 (smad1), found in Danio rerio (Zebrafish).